A 358-amino-acid polypeptide reads, in one-letter code: Biotin synthase (358 aa).

The region spanning 44–272 (NRVRLNYLVN…DSEVRAAAGR (229 aa)) is the Radical SAM core domain. Cys59, Cys63, and Cys66 together coordinate [4Fe-4S] cluster. [2Fe-2S] cluster is bound by residues Cys103, Cys136, Cys196, and Arg267.

It belongs to the radical SAM superfamily. Biotin synthase family. Homodimer. [4Fe-4S] cluster serves as cofactor. [2Fe-2S] cluster is required as a cofactor.

The enzyme catalyses (4R,5S)-dethiobiotin + (sulfur carrier)-SH + 2 reduced [2Fe-2S]-[ferredoxin] + 2 S-adenosyl-L-methionine = (sulfur carrier)-H + biotin + 2 5'-deoxyadenosine + 2 L-methionine + 2 oxidized [2Fe-2S]-[ferredoxin]. It functions in the pathway cofactor biosynthesis; biotin biosynthesis; biotin from 7,8-diaminononanoate: step 2/2. Its function is as follows. Catalyzes the conversion of dethiobiotin (DTB) to biotin by the insertion of a sulfur atom into dethiobiotin via a radical-based mechanism. This is Biotin synthase from Cutibacterium acnes (strain DSM 16379 / KPA171202) (Propionibacterium acnes).